The following is a 185-amino-acid chain: Adenine phosphoribosyltransferase (185 aa).

It belongs to the purine/pyrimidine phosphoribosyltransferase family.

It is found in the cytoplasm. The catalysed reaction is AMP + diphosphate = 5-phospho-alpha-D-ribose 1-diphosphate + adenine. It participates in purine metabolism; AMP biosynthesis via salvage pathway; AMP from adenine: step 1/1. In terms of biological role, catalyzes a salvage reaction resulting in the formation of AMP, that is energically less costly than de novo synthesis. The chain is Adenine phosphoribosyltransferase (aprt-1) from Caenorhabditis elegans.